A 640-amino-acid polypeptide reads, in one-letter code: ESX-3 secretion system protein EccA3 (640 aa).

Position 393–400 (393–400 (GPPGTGKT)) interacts with ATP.

This sequence belongs to the CbxX/CfxQ family. Part of the ESX-3 / type VII secretion system (T7SS), which is composed of cytosolic and membrane components.

Its subcellular location is the cytoplasm. Part of an ESX-3 / type VII specialized secretion system (T7SS), which exports several proteins. EccA3 exhibits ATPase activity and may provide energy for the export of ESX-3 substrates. The sequence is that of ESX-3 secretion system protein EccA3 from Mycobacterium leprae (strain TN).